The sequence spans 116 residues: Ribonuclease P protein component (116 aa).

It belongs to the RnpA family. As to quaternary structure, consists of a catalytic RNA component (M1 or rnpB) and a protein subunit.

It carries out the reaction Endonucleolytic cleavage of RNA, removing 5'-extranucleotides from tRNA precursor.. RNaseP catalyzes the removal of the 5'-leader sequence from pre-tRNA to produce the mature 5'-terminus. It can also cleave other RNA substrates such as 4.5S RNA. The protein component plays an auxiliary but essential role in vivo by binding to the 5'-leader sequence and broadening the substrate specificity of the ribozyme. This Mycobacterium bovis (strain ATCC BAA-935 / AF2122/97) protein is Ribonuclease P protein component.